The chain runs to 328 residues: uncharacterized protein (328 aa).

A disordered region spans residues 1–22 (MPVKPNQPRPSTKQDPSSGASR). A compositionally biased stretch (polar residues) spans 9–21 (RPSTKQDPSSGAS). 6 helical membrane passes run 66 to 86 (FSFL…GFVL), 126 to 146 (TVGL…IGNL), 176 to 196 (FLSL…TSVA), 221 to 241 (LIAL…ILWV), 255 to 275 (GTLM…VALP), and 290 to 310 (IGLM…AAWI).

It to E.coli YhjD.

The protein localises to the cell inner membrane. This is an uncharacterized protein from Dickeya dadantii (strain 3937) (Erwinia chrysanthemi (strain 3937)).